Consider the following 259-residue polypeptide: Type III pantothenate kinase (259 aa).

Residue 6–13 (DVGNTNIV) coordinates ATP. Residues Tyr-100 and 107–110 (GADR) contribute to the substrate site. The active-site Proton acceptor is Asp-109. Asp-129 is a K(+) binding site. Thr-132 lines the ATP pocket. Thr-184 is a binding site for substrate.

This sequence belongs to the type III pantothenate kinase family. Homodimer. NH4(+) serves as cofactor. The cofactor is K(+).

The protein resides in the cytoplasm. The enzyme catalyses (R)-pantothenate + ATP = (R)-4'-phosphopantothenate + ADP + H(+). It functions in the pathway cofactor biosynthesis; coenzyme A biosynthesis; CoA from (R)-pantothenate: step 1/5. Functionally, catalyzes the phosphorylation of pantothenate (Pan), the first step in CoA biosynthesis. This chain is Type III pantothenate kinase, found in Clostridium perfringens (strain ATCC 13124 / DSM 756 / JCM 1290 / NCIMB 6125 / NCTC 8237 / Type A).